Reading from the N-terminus, the 87-residue chain is Small ribosomal subunit protein bS20 (87 aa).

Belongs to the bacterial ribosomal protein bS20 family.

Its function is as follows. Binds directly to 16S ribosomal RNA. In Neorickettsia sennetsu (strain ATCC VR-367 / Miyayama) (Ehrlichia sennetsu), this protein is Small ribosomal subunit protein bS20.